A 44-amino-acid polypeptide reads, in one-letter code: Photosystem I reaction center subunit IX (44 aa).

The chain crosses the membrane as a helical span at residues tyrosine 7 to isoleucine 27.

It belongs to the PsaJ family.

Its subcellular location is the plastid. The protein resides in the chloroplast thylakoid membrane. In terms of biological role, may help in the organization of the PsaE and PsaF subunits. The polypeptide is Photosystem I reaction center subunit IX (Phalaenopsis aphrodite subsp. formosana (Moth orchid)).